The following is a 298-amino-acid chain: MATH domain and coiled-coil domain-containing protein At3g58280 (298 aa).

The region spanning 9–128 (KKTFGWVIKD…NGEITIIAEV (120 aa)) is the MATH domain. Positions 240–288 (NLDWLRQKFDQALEKQIAYDTRIGELEKQVKKRKLAVTELEADLEKEKA) form a coiled coil.

The polypeptide is MATH domain and coiled-coil domain-containing protein At3g58280 (Arabidopsis thaliana (Mouse-ear cress)).